The following is a 486-amino-acid chain: MTRIKLSYFTIGLVALLLALALWPNIPWRNGQEGQLDQIKARGELRVSTISSPLIYSTEKDTPSGFDYELAKRFADYLGVKLVIIPHHNIDDLFDALDNDDTDLLAAGLIYNRERLNRARTGPAYYSVSQQLVYRLGSPRPKSFSDLKGQVVVASGSAHMTTLKRLKQTKYPELNWSSSVDKSGKELLEQVAEGKLDYTLGDSATIALLQRIHPQLAVAFDVTDEEPVTWYFKQSDDDSLYAAMLDFYSEMVEDGSLARLEEKYLGHVGSFDYVDTKTFLSAIDNVLPSYQHLFEKHAGDIDWKLLAVIAYQESHWNPQATSPTGVRGLMMLTRVTADGLGVKDRVDPEESIRGGAIYLQRLMKKLPETIPEDERIWFALAAYNLGYGHMLDARRLTKNQNGNPDSWVDVKMRLPMLSQKRYYPSTTYGYARGHEAYNYVENIRRYQVSLVGYLQEKEKKAAQHAAIEAELGKSNPVVGPGWSIGD.

The first 21 residues, 1–21 (MTRIKLSYFTIGLVALLLALA), serve as a signal peptide directing secretion. The segment at 22–268 (LWPNIPWRNG…RLEEKYLGHV (247 aa)) is non-LT domain. Residues 269–486 (GSFDYVDTKT…VVGPGWSIGD (218 aa)) are LT domain. Glu-313 is an active-site residue.

The protein in the N-terminal section; belongs to the bacterial solute-binding protein 3 family. This sequence in the C-terminal section; belongs to the transglycosylase Slt family.

The protein resides in the cell outer membrane. It carries out the reaction Exolytic cleavage of the (1-&gt;4)-beta-glycosidic linkage between N-acetylmuramic acid (MurNAc) and N-acetylglucosamine (GlcNAc) residues in peptidoglycan, from either the reducing or the non-reducing ends of the peptidoglycan chains, with concomitant formation of a 1,6-anhydrobond in the MurNAc residue.. Murein-degrading enzyme that degrades murein glycan strands and insoluble, high-molecular weight murein sacculi, with the concomitant formation of a 1,6-anhydromuramoyl product. Lytic transglycosylases (LTs) play an integral role in the metabolism of the peptidoglycan (PG) sacculus. Their lytic action creates space within the PG sacculus to allow for its expansion as well as for the insertion of various structures such as secretion systems and flagella. The protein is Membrane-bound lytic murein transglycosylase F of Yersinia pseudotuberculosis serotype I (strain IP32953).